A 327-amino-acid polypeptide reads, in one-letter code: DNA-directed RNA polymerase subunit alpha (327 aa).

An alpha N-terminal domain (alpha-NTD) region spans residues 1–231; it reads MIYQMQMPAK…DHIMYFANFS (231 aa). Residues 247 to 327 are alpha C-terminal domain (alpha-CTD); it reads DEFESMRKLL…GMDITRYQMK (81 aa).

It belongs to the RNA polymerase alpha chain family. Homodimer. The RNAP catalytic core consists of 2 alpha, 1 beta, 1 beta' and 1 omega subunit. When a sigma factor is associated with the core the holoenzyme is formed, which can initiate transcription.

The enzyme catalyses RNA(n) + a ribonucleoside 5'-triphosphate = RNA(n+1) + diphosphate. DNA-dependent RNA polymerase catalyzes the transcription of DNA into RNA using the four ribonucleoside triphosphates as substrates. In Chlorobium phaeobacteroides (strain DSM 266 / SMG 266 / 2430), this protein is DNA-directed RNA polymerase subunit alpha.